A 520-amino-acid chain; its full sequence is CBL-interacting serine/threonine-protein kinase 18 (520 aa).

Disordered regions lie at residues 1–29 and 48–67; these read MAQA…PHPK and TDKD…SPRN. Residues 17–29 show a composition bias toward pro residues; that stretch reads PDPPPPPPPPHPK. Low complexity predominate over residues 55 to 66; the sequence is SPQSPRSPRSPR. Positions 74–328 constitute a Protein kinase domain; it reads YELGKLLGHG…IPEIMKNRWF (255 aa). ATP contacts are provided by residues 80 to 88 and lysine 103; that span reads LGHGTFAKV. Aspartate 196 (proton acceptor) is an active-site residue. The segment at 214 to 243 is activation loop; the sequence is DFGLSAVAEQLRQDGLCHTFCGTPAYIAPE. The residue at position 218 (serine 218) is a Phosphoserine. At threonine 232 the chain carries Phosphothreonine. The interval 349–368 is disordered; the sequence is EDEEEEASSSGRSSTVSESD. A compositionally biased stretch (low complexity) spans 356-366; sequence SSSGRSSTVSE. Residues 382–406 form the NAF domain; it reads PRPSSLNAFDIISFSSGFDLSGLFE. Residues 410 to 439 are PPI; it reads GEGTRFVSGAPVSKIISKLEEIAKIVSFTV.

It belongs to the protein kinase superfamily. CAMK Ser/Thr protein kinase family. SNF1 subfamily. In terms of assembly, interacts with CBL1 and CBL9. Requires Mn(2+) as cofactor.

It carries out the reaction L-seryl-[protein] + ATP = O-phospho-L-seryl-[protein] + ADP + H(+). It catalyses the reaction L-threonyl-[protein] + ATP = O-phospho-L-threonyl-[protein] + ADP + H(+). Its function is as follows. CIPK serine-threonine protein kinases interact with CBL proteins. Binding of a CBL protein to the regulatory NAF domain of CIPK protein lead to the activation of the kinase in a calcium-dependent manner. The chain is CBL-interacting serine/threonine-protein kinase 18 (CIPK18) from Arabidopsis thaliana (Mouse-ear cress).